Here is a 182-residue protein sequence, read N- to C-terminus: Ribosome-recycling factor (182 aa).

This sequence belongs to the RRF family.

The protein resides in the cytoplasm. Its function is as follows. Responsible for the release of ribosomes from messenger RNA at the termination of protein biosynthesis. May increase the efficiency of translation by recycling ribosomes from one round of translation to another. The chain is Ribosome-recycling factor from Synechococcus sp. (strain CC9605).